The following is a 112-amino-acid chain: Integration host factor subunit alpha (112 aa).

The protein belongs to the bacterial histone-like protein family. As to quaternary structure, heterodimer of an alpha and a beta chain.

Functionally, this protein is one of the two subunits of integration host factor, a specific DNA-binding protein that functions in genetic recombination as well as in transcriptional and translational control. The sequence is that of Integration host factor subunit alpha from Sinorhizobium medicae (strain WSM419) (Ensifer medicae).